The primary structure comprises 173 residues: Macro domain-containing protein in gbd 3'region (173 aa).

The Macro domain occupies 1–173 (MSGEHLQVVH…NYRLYRERLS (173 aa)).

Belongs to the MacroD-type family.

This chain is Macro domain-containing protein in gbd 3'region, found in Cupriavidus necator (Alcaligenes eutrophus).